Here is a 166-residue protein sequence, read N- to C-terminus: UBA-like domain-containing protein 2 (166 aa).

A disordered region spans residues 120-166 (QQPVWLPPASPTTHLHHHHHHPQPVWPPNSQPTGGPQKAMAAMDGQR).

Belongs to the UBALD family.

The sequence is that of UBA-like domain-containing protein 2 (ubald2) from Xenopus tropicalis (Western clawed frog).